The sequence spans 74 residues: uncharacterized protein (74 aa).

Residues 52–72 (ITFGFTVLGLGIGMIFGDAGL) form a helical membrane-spanning segment.

Its subcellular location is the membrane. This is an uncharacterized protein from Methanocaldococcus jannaschii (strain ATCC 43067 / DSM 2661 / JAL-1 / JCM 10045 / NBRC 100440) (Methanococcus jannaschii).